The primary structure comprises 220 residues: Large ribosomal subunit protein bL21c (220 aa).

It belongs to the bacterial ribosomal protein bL21 family. As to quaternary structure, part of the 50S ribosomal subunit.

The protein localises to the plastid. The protein resides in the chloroplast. This protein binds to 23S ribosomal RNA in the presence of protein L20. This Arabidopsis thaliana (Mouse-ear cress) protein is Large ribosomal subunit protein bL21c (RPL21).